The sequence spans 157 residues: 2-C-methyl-D-erythritol 2,4-cyclodiphosphate synthase (157 aa).

Aspartate 9 and histidine 11 together coordinate a divalent metal cation. 4-CDP-2-C-methyl-D-erythritol 2-phosphate is bound by residues 9–11 (DVH) and 35–36 (HS). Histidine 43 provides a ligand contact to a divalent metal cation. 4-CDP-2-C-methyl-D-erythritol 2-phosphate contacts are provided by residues 57–59 (DIG), 62–66 (FPDTD), 101–107 (AEKPKMA), 133–136 (TTTE), phenylalanine 140, and arginine 143.

Belongs to the IspF family. As to quaternary structure, homotrimer. Requires a divalent metal cation as cofactor.

It carries out the reaction 4-CDP-2-C-methyl-D-erythritol 2-phosphate = 2-C-methyl-D-erythritol 2,4-cyclic diphosphate + CMP. It functions in the pathway isoprenoid biosynthesis; isopentenyl diphosphate biosynthesis via DXP pathway; isopentenyl diphosphate from 1-deoxy-D-xylulose 5-phosphate: step 4/6. Functionally, involved in the biosynthesis of isopentenyl diphosphate (IPP) and dimethylallyl diphosphate (DMAPP), two major building blocks of isoprenoid compounds. Catalyzes the conversion of 4-diphosphocytidyl-2-C-methyl-D-erythritol 2-phosphate (CDP-ME2P) to 2-C-methyl-D-erythritol 2,4-cyclodiphosphate (ME-CPP) with a corresponding release of cytidine 5-monophosphate (CMP). This chain is 2-C-methyl-D-erythritol 2,4-cyclodiphosphate synthase, found in Listeria monocytogenes serotype 4b (strain CLIP80459).